Consider the following 97-residue polypeptide: Large ribosomal subunit protein uL23 (97 aa).

This sequence belongs to the universal ribosomal protein uL23 family. As to quaternary structure, part of the 50S ribosomal subunit. Contacts protein L29, and trigger factor when it is bound to the ribosome.

One of the early assembly proteins it binds 23S rRNA. One of the proteins that surrounds the polypeptide exit tunnel on the outside of the ribosome. Forms the main docking site for trigger factor binding to the ribosome. The chain is Large ribosomal subunit protein uL23 from Brucella melitensis biotype 2 (strain ATCC 23457).